A 376-amino-acid chain; its full sequence is PqqA peptide cyclase (376 aa).

Residues 7–222 (VGLPLWLLAE…TNEYRDKLKA (216 aa)) enclose the Radical SAM core domain. [4Fe-4S] cluster is bound by residues Cys21, Cys25, and Cys28.

This sequence belongs to the radical SAM superfamily. PqqE family. In terms of assembly, interacts with PqqD. The interaction is necessary for activity of PqqE. It depends on [4Fe-4S] cluster as a cofactor.

The enzyme catalyses [PQQ precursor protein] + S-adenosyl-L-methionine = E-Y cross-linked-[PQQ precursor protein] + 5'-deoxyadenosine + L-methionine + H(+). It functions in the pathway cofactor biosynthesis; pyrroloquinoline quinone biosynthesis. Its function is as follows. Catalyzes the cross-linking of a glutamate residue and a tyrosine residue in the PqqA protein as part of the biosynthesis of pyrroloquinoline quinone (PQQ). The sequence is that of PqqA peptide cyclase from Pseudomonas putida (strain ATCC 47054 / DSM 6125 / CFBP 8728 / NCIMB 11950 / KT2440).